Here is a 635-residue protein sequence, read N- to C-terminus: Paraneoplastic antigen-like protein 8B (635 aa).

Disordered regions lie at residues 115 to 202 (PTQA…DESL), 260 to 332 (TDKS…NPEF), and 492 to 635 (AARE…PKCR). Residues 133–147 (SETQAQDSGEVTGQA) show a composition bias toward polar residues. Residues 156 to 183 (NPRRGRRGRRNRTRRNRLTQKGKKRSRG) are compositionally biased toward basic residues. Residues 261-273 (DKSKKEEAEKEPA) show a composition bias toward basic and acidic residues. 2 stretches are compositionally biased toward acidic residues: residues 302–329 (PDEE…ELDN) and 502–524 (GSEE…EASE). The span at 531-540 (RKPRAKRART) shows a compositional bias: basic residues. The segment covering 541 to 557 (APRGLTPAGAPPTASGA) has biased composition (low complexity). Basic residues-rich tracts occupy residues 558–568 (RKTRAGGRGRG) and 619–635 (ARGK…PKCR).

Belongs to the PNMA family.

In Homo sapiens (Human), this protein is Paraneoplastic antigen-like protein 8B.